The primary structure comprises 462 residues: Cysteine--tRNA ligase (462 aa).

Cysteine 29 lines the Zn(2+) pocket. Positions 31–41 (MTVYDLCHLGH) match the 'HIGH' region motif. Zn(2+)-binding residues include cysteine 217, histidine 242, and glutamate 246. The short motif at 274-278 (KMSKS) is the 'KMSKS' region element. Lysine 277 contributes to the ATP binding site.

This sequence belongs to the class-I aminoacyl-tRNA synthetase family. As to quaternary structure, monomer. Zn(2+) serves as cofactor.

The protein localises to the cytoplasm. The enzyme catalyses tRNA(Cys) + L-cysteine + ATP = L-cysteinyl-tRNA(Cys) + AMP + diphosphate. This chain is Cysteine--tRNA ligase, found in Polaromonas sp. (strain JS666 / ATCC BAA-500).